The following is a 209-amino-acid chain: Type III pantothenate kinase (209 aa).

5–12 contacts ATP; that stretch reads DIGNSNAN. Residues Tyr-68 and 72-75 each bind substrate; that span reads GIDR. The active-site Proton acceptor is Asp-74. Residue Asp-89 coordinates K(+). Residue Ser-92 coordinates ATP. Position 144 (Thr-144) interacts with substrate.

Belongs to the type III pantothenate kinase family. In terms of assembly, homodimer. NH4(+) is required as a cofactor. It depends on K(+) as a cofactor.

Its subcellular location is the cytoplasm. The catalysed reaction is (R)-pantothenate + ATP = (R)-4'-phosphopantothenate + ADP + H(+). The protein operates within cofactor biosynthesis; coenzyme A biosynthesis; CoA from (R)-pantothenate: step 1/5. Catalyzes the phosphorylation of pantothenate (Pan), the first step in CoA biosynthesis. The chain is Type III pantothenate kinase from Campylobacter jejuni subsp. jejuni serotype O:2 (strain ATCC 700819 / NCTC 11168).